A 114-amino-acid polypeptide reads, in one-letter code: Iron-sulfur cluster insertion protein ErpA (114 aa).

Iron-sulfur cluster-binding residues include Cys-42, Cys-106, and Cys-108.

It belongs to the HesB/IscA family. As to quaternary structure, homodimer. Iron-sulfur cluster serves as cofactor.

Required for insertion of 4Fe-4S clusters for at least IspG. In Pasteurella multocida (strain Pm70), this protein is Iron-sulfur cluster insertion protein ErpA.